A 245-amino-acid polypeptide reads, in one-letter code: Eukaryotic translation initiation factor 6 (245 aa).

Y113 is modified (phosphotyrosine). T165 is modified (phosphothreonine). S166 is subject to Phosphoserine. S174 and S175 each carry phosphoserine; by CK1. S235 carries the phosphoserine; by PKC modification. A phosphoserine mark is found at S239 and S243.

The protein belongs to the eIF-6 family. Monomer. Associates with the 60S ribosomal subunit. Interacts with RACK1. Interacts with DICER1, AGO2, TARBP2, MOV10 and RPL7A; they form a large RNA-induced silencing complex (RISC). In terms of processing, phosphorylation at Ser-174 and Ser-175 by CSNK1D/CK1 promotes nuclear export. Post-translationally, ufmylated by UFL1. Expressed at very high levels in colon carcinoma with lower levels in normal colon and ileum and lowest levels in kidney and muscle (at protein level).

It localises to the cytoplasm. It is found in the nucleus. Its subcellular location is the nucleolus. In terms of biological role, binds to the 60S ribosomal subunit and prevents its association with the 40S ribosomal subunit to form the 80S initiation complex in the cytoplasm. Behaves as a stimulatory translation initiation factor downstream insulin/growth factors. Is also involved in ribosome biogenesis. Associates with pre-60S subunits in the nucleus and is involved in its nuclear export. Cytoplasmic release of TIF6 from 60S subunits and nuclear relocalization is promoted by a RACK1 (RACK1)-dependent protein kinase C activity. In tissues responsive to insulin, controls fatty acid synthesis and glycolysis by exerting translational control of adipogenic transcription factors such as CEBPB, CEBPD and ATF4 that have G/C rich or uORF in their 5'UTR. Required for ROS-dependent megakaryocyte maturation and platelets formation, controls the expression of mitochondrial respiratory chain genes involved in reactive oxygen species (ROS) synthesis. Involved in miRNA-mediated gene silencing by the RNA-induced silencing complex (RISC). Required for both miRNA-mediated translational repression and miRNA-mediated cleavage of complementary mRNAs by RISC. Modulates cell cycle progression and global translation of pre-B cells, its activation seems to be rate-limiting in tumorigenesis and tumor growth. This Homo sapiens (Human) protein is Eukaryotic translation initiation factor 6.